Consider the following 843-residue polypeptide: Aconitase AMT8-2 (843 aa).

Residue 258-260 (DSH) coordinates substrate. The [4Fe-4S] cluster site is built by C450, C513, and C516. Substrate contacts are provided by residues R536, R541, and 712–713 (SR).

It belongs to the aconitase/IPM isomerase family.

The protein operates within mycotoxin biosynthesis. Its function is as follows. Aconitase; part of the gene clusters that mediate the biosynthesis of AM-toxins, host-selective toxins (HSTs) causing Alternaria blotch on apple, a worldwide distributed disease. AM-toxins are cyclic depsipeptides containing the 3 residues 2-hydroxy-isovaleric acid (2-HIV), dehydroalanine, L-alanine which are common for all 3 AM-toxins I to III. The fourth precursor is L-alpha-amino-methoxyphenyl-valeric acid (L-Amv) for AM-toxin I, L-alpha-amino-phenyl-valeric acid (L-Apv) for AM-toxin II, and L-alpha-amino-hydroxyphenyl-valeric acid (L-Ahv) for AM-toxin III. AM-toxins have two target sites for affecting susceptible apple cells; they cause invagination of the plasma membrane and electrolyte loss and chloroplast disorganization. The non-ribosomal peptide synthetase AMT1 contains 4 catalytic modules and is responsible for activation of each residue in AM-toxin. The aldo-keto reductase AMT2 catalyzes the conversion of 2-keto-isovaleric acid (2-KIV) to 2-hydroxy-isovaleric acid (2-HIV), one of the precursor residues incorporated by AMT1 during AM-toxin biosynthesis, by reduction of its ketone to an alcohol. The cytochrome P450 monooxygenase AMT3 and the thioesterase AMT4 are also important for AM-toxin production, but their exact function within the AM-toxin biosynthesis are not known yet. Up to 21 proteins (including AMT1 to AMT4) are predicted to be involved in AM-toxin biosynthesis since their expression ishighly up-regulated in AM-toxin-producing cultures. This chain is Aconitase AMT8-2, found in Alternaria alternata (Alternaria rot fungus).